Here is a 94-residue protein sequence, read N- to C-terminus: Pyrimidine/purine nucleoside phosphorylase 2 (94 aa).

The protein belongs to the nucleoside phosphorylase PpnP family.

The catalysed reaction is a purine D-ribonucleoside + phosphate = a purine nucleobase + alpha-D-ribose 1-phosphate. It carries out the reaction adenosine + phosphate = alpha-D-ribose 1-phosphate + adenine. It catalyses the reaction cytidine + phosphate = cytosine + alpha-D-ribose 1-phosphate. The enzyme catalyses guanosine + phosphate = alpha-D-ribose 1-phosphate + guanine. The catalysed reaction is inosine + phosphate = alpha-D-ribose 1-phosphate + hypoxanthine. It carries out the reaction thymidine + phosphate = 2-deoxy-alpha-D-ribose 1-phosphate + thymine. It catalyses the reaction uridine + phosphate = alpha-D-ribose 1-phosphate + uracil. The enzyme catalyses xanthosine + phosphate = alpha-D-ribose 1-phosphate + xanthine. Functionally, catalyzes the phosphorolysis of diverse nucleosides, yielding D-ribose 1-phosphate and the respective free bases. Can use uridine, adenosine, guanosine, cytidine, thymidine, inosine and xanthosine as substrates. Also catalyzes the reverse reactions. The polypeptide is Pyrimidine/purine nucleoside phosphorylase 2 (Psychrobacter cryohalolentis (strain ATCC BAA-1226 / DSM 17306 / VKM B-2378 / K5)).